The following is a 214-amino-acid chain: MKLLILTCLVAVALARPKQPIKHQGLPQGVLNENLLRFFVAPFPEVFGKEKVNELSTDIGSESTEDQAMEDIKQMEAESISSSEEIVPISVEQKHIQKEDVPSERYLGYLEQLLRLKKYNVPQLEIVPNLAEEQLHSMKEGIHAQQKEPMIGVNQELAYFYPQLFRQFYQLDAYPSGAWYYVPLGTQYPDAPSFSDIPNPIGSENSGKTTMPLW.

The first 15 residues, 1 to 15 (MKLLILTCLVAVALA), serve as a signal peptide directing secretion. Ser-63, Ser-79, Ser-81, Ser-82, Ser-83, and Ser-90 each carry phosphoserine. 2 repeats span residues 85-99 (EIVPISVEQKHIQKE) and 125-140 (EIVPNLAEEQLHSMKE).

Belongs to the alpha-casein family. As to expression, mammary gland specific. Secreted in milk.

Its subcellular location is the secreted. Functionally, important role in the capacity of milk to transport calcium phosphate. This chain is Alpha-S1-casein (CSN1S1), found in Bubalus bubalis (Domestic water buffalo).